The primary structure comprises 1217 residues: ATP-dependent helicase/nuclease subunit A (1217 aa).

Positions 10–475 (VIWTDAQWQS…IDLSQNFRSR (466 aa)) constitute a UvrD-like helicase ATP-binding domain. Residue 31-38 (AAAGSGKT) participates in ATP binding. One can recognise a UvrD-like helicase C-terminal domain in the interval 476–786 (KEVLSTTNYI…RMMTIHSSKG (311 aa)).

The protein belongs to the helicase family. AddA subfamily. In terms of assembly, heterodimer of AddA and AddB/RexB. It depends on Mg(2+) as a cofactor.

It catalyses the reaction Couples ATP hydrolysis with the unwinding of duplex DNA by translocating in the 3'-5' direction.. The enzyme catalyses ATP + H2O = ADP + phosphate + H(+). In terms of biological role, the heterodimer acts as both an ATP-dependent DNA helicase and an ATP-dependent, dual-direction single-stranded exonuclease. Recognizes the chi site generating a DNA molecule suitable for the initiation of homologous recombination. The AddA nuclease domain is required for chi fragment generation; this subunit has the helicase and 3' -&gt; 5' nuclease activities. The chain is ATP-dependent helicase/nuclease subunit A from Staphylococcus aureus (strain USA300).